The following is a 604-amino-acid chain: ATPase family AAA domain-containing protein 3A homolog (604 aa).

The interval methionine 1 to alanine 50 is disordered. Polar residues predominate over residues asparagine 8–glycine 19. Residues proline 29–alanine 50 show a composition bias toward basic and acidic residues. Residues glutamate 62–alanine 221 adopt a coiled-coil conformation. ATP is bound at residue glycine 358–threonine 365.

As to quaternary structure, can form homooligomers.

It localises to the mitochondrion inner membrane. The protein localises to the mitochondrion matrix. It is found in the mitochondrion nucleoid. Its function is as follows. Required to maintain the proper number of mitochondria in neurons and muscles. This is ATPase family AAA domain-containing protein 3A homolog from Drosophila melanogaster (Fruit fly).